Reading from the N-terminus, the 372-residue chain is Cytochrome b (372 aa).

Helical transmembrane passes span 25-45, 69-90, 105-125, and 170-190; these read FGSMLLTCLMLQILTGFFLAI, WIMQNLHAISASLFFICVYIHI, WLSGMTLLVFLMATAFFGYVL, and FFALHFILPFVIISLSSIHIM. Histidine 75 and histidine 89 together coordinate heme b. Heme b-binding residues include histidine 174 and histidine 188. Residue histidine 193 participates in a ubiquinone binding. 4 consecutive transmembrane segments (helical) span residues 218–238, 280–300, 312–332, and 339–358; these read YKDMLMITTMITLLFLILSFS, LGGTLALLLSVVILTTAPFTH, LSQILFWTFIATFITITWTAS, and FILISQTTSIFYFSFFIMAP.

It belongs to the cytochrome b family. As to quaternary structure, the cytochrome bc1 complex contains 3 respiratory subunits (MT-CYB, CYC1 and UQCRFS1), 2 core proteins (UQCRC1 and UQCRC2) and probably 6 low-molecular weight proteins. Heme b serves as cofactor.

The protein localises to the mitochondrion inner membrane. Component of the ubiquinol-cytochrome c reductase complex (complex III or cytochrome b-c1 complex) that is part of the mitochondrial respiratory chain. The b-c1 complex mediates electron transfer from ubiquinol to cytochrome c. Contributes to the generation of a proton gradient across the mitochondrial membrane that is then used for ATP synthesis. This chain is Cytochrome b (MT-CYB), found in Hemachatus haemachatus (Rinkhals).